The following is a 947-amino-acid chain: ATP-dependent RNA helicase DDX42 (947 aa).

A compositionally biased stretch (gly residues) spans 1–18 (MNWNKGGSGNKRGFGFGG). 3 disordered regions span residues 1–54 (MNWN…NQLP), 68–114 (EENS…PLEA), and 176–200 (NLEY…LPPI). The segment covering 34–54 (VSHSAFQSASSKYGSTSNQLP) has biased composition (polar residues). The segment covering 68–81 (EENSYFDDEEEDSS) has biased composition (acidic residues). Residues 112 to 152 (LEAFMAEVEDQAAKDMRKLEERDKEKANARGIRDDIEEEDD) adopt a coiled-coil conformation. The Q motif motif lies at 250 to 278 (SSFAHFGFDEQLLHQIRKSEYTQPTPIQC). In terms of domain architecture, Helicase ATP-binding spans 281 to 456 (IPVALSGRDM…RDILVDPIRV (176 aa)). An ATP-binding site is contributed by 294–301 (AKTGSGKT). Residues 404–407 (DEAD) carry the DEAD box motif. The 146-residue stretch at 484 to 629 (WLTRRLVEFT…YVSKELLDLA (146 aa)) folds into the Helicase C-terminal domain. Disordered regions lie at residues 731–754 (SAGS…EAAP) and 797–947 (GASA…RWDS). Over residues 805 to 929 (GGRERHSDSK…RKEGTREAKT (125 aa)) the composition is skewed to basic and acidic residues. Residues 938–947 (PKRKKSRWDS) show a composition bias toward basic residues.

This sequence belongs to the DEAD box helicase family. DDX42 subfamily. In terms of assembly, transient component of the SF3B subcomplex of the 17S U2 SnRNP complex.

The protein localises to the cytoplasm. Its subcellular location is the nucleus. The catalysed reaction is ATP + H2O = ADP + phosphate + H(+). In terms of biological role, ATP-dependent RNA helicase that binds to partially double-stranded RNAs (dsRNAs) in order to unwind RNA secondary structures. Unwinding is promoted in the presence of single-strand binding proteins. Also mediates RNA duplex formation thereby displacing the single-strand RNA binding protein. ATP and ADP modulate its activity: ATP binding and hydrolysis by DDX42 triggers RNA strand separation, whereas the ADP-bound form of the protein triggers annealing of complementary RNA strands. Required for assembly of the 17S U2 SnRNP complex of the spliceosome, a large ribonucleoprotein complex that removes introns from transcribed pre-mRNAs: DDX42 associates transiently with the SF3B subcomplex of the 17S U2 SnRNP complex and is released after fulfilling its role in the assembly of 17S U2 SnRNP. The chain is ATP-dependent RNA helicase DDX42 (ddx42) from Xenopus laevis (African clawed frog).